The following is a 176-amino-acid chain: Interleukin-7 (176 aa).

An N-terminal signal peptide occupies residues 1–25 (MFHVSFRYIFGIPPLILVLLPVASS). Intrachain disulfides connect C27/C165, C58/C153, and C71/C116. Residues N94, N115, and N140 are each glycosylated (N-linked (GlcNAc...) asparagine). Residues 118-143 (SKGKGRKPPSLSEAQPTKNLEENKSS) are disordered.

It belongs to the IL-7/IL-9 family. Interacts with IL7R and CSF2RG.

It localises to the secreted. Functionally, hematopoietic cytokine that plays an essential role in the development, expansion, and survival of naive and memory T-cells and B-cells thereby regulating the number of mature lymphocytes and maintaining lymphoid homeostasis. Mechanistically, exerts its biological effects through a receptor composed of IL7RA subunit and the cytokine receptor common subunit gamma/CSF2RG. Binding to the receptor leads to activation of various kinases including JAK1 or JAK3 depending on the cell type and subsequently propagation of signals through activation of several downstream signaling pathways including the PI3K/Akt/mTOR or the JAK-STAT5. The sequence is that of Interleukin-7 (IL7) from Bos taurus (Bovine).